A 1745-amino-acid chain; its full sequence is Collagen alpha-3(V) chain (1745 aa).

Positions Met-1–Ala-29 are cleaved as a signal peptide. Residues Asp-62–Cys-224 enclose the Laminin G-like domain. N-linked (GlcNAc...) asparagine glycosylation is found at Asn-102 and Asn-141. The tract at residues Gln-211 to Glu-391 is nonhelical region. Disordered stretches follow at residues Ala-230–Pro-304, Arg-322–Ser-362, Gly-387–Pro-439, and Ser-476–Leu-1492. Positions Pro-244–Asn-267 are enriched in basic residues. The O-linked (Xyl...) (chondroitin sulfate) serine glycan is linked to Ser-349. Collagen-like domains are found at residues Glu-391–Gly-440 and Gly-482–Arg-538. The tract at residues Gly-392–Pro-1489 is triple-helical region. Pro residues predominate over residues Ser-406–Ala-424. Composition is skewed to low complexity over residues Leu-426–Pro-439, Arg-489–Pro-499, and Glu-597–Thr-619. Residues Gln-724–Asp-733 are compositionally biased toward basic and acidic residues. A compositionally biased stretch (low complexity) spans Pro-765–Leu-792. Collagen-like domains are found at residues Gly-824–Pro-877, Gly-905–Gly-950, and Leu-951–Gly-989. Residues Leu-967–Pro-979 are compositionally biased toward low complexity. The span at Gly-1016 to Gly-1025 shows a compositional bias: gly residues. Low complexity-rich tracts occupy residues Ala-1116–Pro-1126 and Val-1141–Leu-1152. The segment covering Gly-1190–Gly-1199 has biased composition (gly residues). Residues Pro-1213–Pro-1222 are compositionally biased toward pro residues. A compositionally biased stretch (low complexity) spans Ser-1234–Pro-1243. A compositionally biased stretch (basic and acidic residues) spans Met-1318–Lys-1330. Positions Ile-1405–Glu-1416 are enriched in low complexity. Residues Gln-1429–Pro-1443 are compositionally biased toward pro residues. The Collagen-like 6 domain maps to Gly-1430–Ala-1488. Residues Pro-1458–Pro-1479 are compositionally biased toward low complexity. In terms of domain architecture, Fibrillar collagen NC1 spans Glu-1514–Ser-1744. 2 disulfides stabilise this stretch: Cys-1585–Cys-1742 and Cys-1651–Cys-1696.

It belongs to the fibrillar collagen family. As to quaternary structure, trimers of two alpha 1(V) and one alpha 2(V) chains in most tissues and trimers of one alpha 1(V), one alpha 2(V), and one alpha 3(V) chains in placenta. Prolines at the third position of the tripeptide repeating unit (G-X-Y) are hydroxylated in some or all of the chains. As to expression, detected in fibroblasts (at protein level). Detected in urine (at protein level).

It is found in the secreted. The protein resides in the extracellular space. It localises to the extracellular matrix. Its function is as follows. Type V collagen is a member of group I collagen (fibrillar forming collagen). It is a minor connective tissue component of nearly ubiquitous distribution. Type V collagen binds to DNA, heparan sulfate, thrombospondin, heparin, and insulin. The polypeptide is Collagen alpha-3(V) chain (COL5A3) (Homo sapiens (Human)).